The chain runs to 260 residues: Arginine esterase (260 aa).

Positions M1–A17 are cleaved as a signal peptide. Positions E18–R24 are cleaved as a propeptide — activation peptide. In terms of domain architecture, Peptidase S1 spans I25–K257. Cystine bridges form between C31–C172, C50–C66, C151–C218, C183–C197, and C208–C233. The Charge relay system role is filled by H65. Residue N79 is glycosylated (N-linked (GlcNAc...) asparagine). D119 functions as the Charge relay system in the catalytic mechanism. The active-site Charge relay system is the S212.

It belongs to the peptidase S1 family. Kallikrein subfamily.

The catalysed reaction is Preferential cleavage of Arg-|-Xaa bonds in small molecule substrates. Highly selective action to release kallidin (lysyl-bradykinin) from kininogen involves hydrolysis of Met-|-Xaa or Leu-|-Xaa.. In terms of biological role, this serine protease is found in dog seminal plasma, its exact physiological function is not known. The protein is Arginine esterase of Canis lupus familiaris (Dog).